A 412-amino-acid chain; its full sequence is 4-hydroxy-3-methylbut-2-en-1-yl diphosphate synthase (ferredoxin) (412 aa).

A compositionally biased stretch (polar residues) spans 1–12; it reads MQTLDRPNAPSQ. The segment at 1-22 is disordered; the sequence is MQTLDRPNAPSQQPYPEPVYPR. Positions 314, 317, 348, and 355 each coordinate [4Fe-4S] cluster.

The protein belongs to the IspG family. [4Fe-4S] cluster is required as a cofactor.

It catalyses the reaction (2E)-4-hydroxy-3-methylbut-2-enyl diphosphate + 2 oxidized [2Fe-2S]-[ferredoxin] + H2O = 2-C-methyl-D-erythritol 2,4-cyclic diphosphate + 2 reduced [2Fe-2S]-[ferredoxin] + H(+). The protein operates within isoprenoid biosynthesis; isopentenyl diphosphate biosynthesis via DXP pathway; isopentenyl diphosphate from 1-deoxy-D-xylulose 5-phosphate: step 5/6. Its function is as follows. Converts 2C-methyl-D-erythritol 2,4-cyclodiphosphate (ME-2,4cPP) into 1-hydroxy-2-methyl-2-(E)-butenyl 4-diphosphate. In Synechococcus sp. (strain JA-3-3Ab) (Cyanobacteria bacterium Yellowstone A-Prime), this protein is 4-hydroxy-3-methylbut-2-en-1-yl diphosphate synthase (ferredoxin).